We begin with the raw amino-acid sequence, 476 residues long: FAD-dependent monooxygenase ausM (476 aa).

FAD is bound by residues Glu41, Gly55, and Arg114. Residue Tyr222 is part of the active site. 2 residues coordinate FAD: Asp314 and Ala327. Residues 447–467 (LGSTPIHMLTLLLPCLFYFMY) traverse the membrane as a helical segment.

It belongs to the paxM FAD-dependent monooxygenase family. It depends on FAD as a cofactor.

Its subcellular location is the membrane. The protein operates within secondary metabolite biosynthesis; terpenoid biosynthesis. In terms of biological role, FAD-dependent monooxygenase; part of the gene cluster A that mediates the biosynthesis of the fungal meroterpenoid acetoxydehydroaustin. The first step of the pathway is the synthesis of 3,5-dimethylorsellinic acid by the polyketide synthase ausA. 3,5-dimethylorsellinic acid is then prenylated by the polyprenyl transferase ausN. Further epoxidation by the FAD-dependent monooxygenase ausM and cyclization by the probable terpene cyclase ausL lead to the formation of protoaustinoid A. Protoaustinoid A is then oxidized to spiro-lactone preaustinoid A3 by the combined action of the FAD-binding monooxygenases ausB and ausC, and the dioxygenase ausE. Acid-catalyzed keto-rearrangement and ring contraction of the tetraketide portion of preaustinoid A3 by ausJ lead to the formation of preaustinoid A4. The aldo-keto reductase ausK, with the help of ausH, is involved in the next step by transforming preaustinoid A4 into isoaustinone which is in turn hydroxylated by the P450 monooxygenase ausI to form austinolide. The cytochrome P450 monooxygenase ausG then modifies austinolide to austinol. Austinol is further acetylated to austin by the O-acetyltransferase ausP, which spontaneously changes to dehydroaustin. The cytochrome P450 monooxygenase then converts dehydroaustin is into 7-dehydrodehydroaustin. The hydroxylation catalyzed by ausR permits the second O-acetyltransferase ausQ to add an additional acetyl group to the molecule, leading to the formation of acetoxydehydroaustin. Due to genetic rearrangements of the clusters and the subsequent loss of some enzymes, the end product of the Penicillium brasilianum austinoid biosynthesis clusters is acetoxydehydroaustin. The sequence is that of FAD-dependent monooxygenase ausM from Penicillium brasilianum.